The primary structure comprises 440 residues: uncharacterized protein (440 aa).

Transmembrane regions (helical) follow at residues 1-21 (MLLVNLAIFIAFLLLLAQLYR), 29-49 (TVFIGLLLGLLFGAVLQSAFE), 70-90 (LLQMIVMPLVFVSILSAIARI), 101-121 (VGVLSTLLITTAISAAIGIAM), 179-199 (TSIISVVIFSALLGVAALSLG), 226-246 (FVIRLTPYGVFALMIKMAATS), 258-278 (IVASYAAIALMFVVHGILLFF), 343-363 (IYPAMLAVMVAPMVGIDPFSF), 366-386 (ILTLIFVVAISSFGIAGVGGG), and 389-409 (FAAIVVLSTLGLPLELIGLLI).

It belongs to the dicarboxylate/amino acid:cation symporter (DAACS) (TC 2.A.23) family.

The protein resides in the cell membrane. This is an uncharacterized protein from Haemophilus influenzae (strain ATCC 51907 / DSM 11121 / KW20 / Rd).